Reading from the N-terminus, the 63-residue chain is Large ribosomal subunit protein bL28 (63 aa).

Belongs to the bacterial ribosomal protein bL28 family.

The sequence is that of Large ribosomal subunit protein bL28 from Symbiobacterium thermophilum (strain DSM 24528 / JCM 14929 / IAM 14863 / T).